A 25-amino-acid chain; its full sequence is Kunitz-type serine protease inhibitor RsTIS5 (25 aa).

Residues 1–25 enclose the BPTI/Kunitz inhibitor domain; sequence EAEPKPFNPVCYEPKEVGPCKAYVP.

Functionally, serine protease inhibitor. Inhibits trypsin, elastase and plasmin. Does not inhibit kallikrein. This chain is Kunitz-type serine protease inhibitor RsTIS5, found in Rhipicephalus sanguineus (Brown dog tick).